Here is a 233-residue protein sequence, read N- to C-terminus: Small ribosomal subunit protein uS3 (233 aa).

The 69-residue stretch at 39–107 folds into the KH type-2 domain; sequence VRQYLTKELA…PAQINIAEVR (69 aa).

Belongs to the universal ribosomal protein uS3 family. As to quaternary structure, part of the 30S ribosomal subunit. Forms a tight complex with proteins S10 and S14.

Its function is as follows. Binds the lower part of the 30S subunit head. Binds mRNA in the 70S ribosome, positioning it for translation. This chain is Small ribosomal subunit protein uS3, found in Citrobacter koseri (strain ATCC BAA-895 / CDC 4225-83 / SGSC4696).